Reading from the N-terminus, the 437-residue chain is GTPase Obg (437 aa).

Positions 2-160 constitute an Obg domain; that stretch reads SMFLDTAKIS…RQLELELKIL (159 aa). Residues 161–338 form the OBG-type G domain; that stretch reads ADVGLVGFPS…LLEATAELLA (178 aa). GTP is bound by residues 167-174, 192-196, 214-217, 284-287, and 319-321; these read GFPSVGKS, FTTIV, DLPG, NKMD, and SSL. The Mg(2+) site is built by S174 and T194. Residues 359–437 enclose the OCT domain; sequence GFAETEKNFE…IGKFEFEFVD (79 aa).

The protein belongs to the TRAFAC class OBG-HflX-like GTPase superfamily. OBG GTPase family. Monomer. Requires Mg(2+) as cofactor.

It is found in the cytoplasm. An essential GTPase which binds GTP, GDP and possibly (p)ppGpp with moderate affinity, with high nucleotide exchange rates and a fairly low GTP hydrolysis rate. Plays a role in control of the cell cycle, stress response, ribosome biogenesis and in those bacteria that undergo differentiation, in morphogenesis control. This chain is GTPase Obg, found in Streptococcus pyogenes serotype M49 (strain NZ131).